A 454-amino-acid polypeptide reads, in one-letter code: ABSCISIC ACID-INSENSITIVE 5-like protein 6 (454 aa).

3 positions are modified to phosphoserine: S32, S55, and S126. A Phosphothreonine modification is found at T169. In terms of domain architecture, bZIP spans I372–Q435. The segment at R374 to K393 is basic motif. The segment at L400–L414 is leucine-zipper.

It belongs to the bZIP family. ABI5 subfamily. In terms of assembly, DNA-binding heterodimer. Interacts with ABI3 and the AFP proteins AFP1, AFP2, AFP3 and AFP4. Expressed in roots and flowers.

The protein resides in the nucleus. Functionally, binds to the ABA-responsive element (ABRE). Mediates stress-responsive ABA signaling. The protein is ABSCISIC ACID-INSENSITIVE 5-like protein 6 (ABF3) of Arabidopsis thaliana (Mouse-ear cress).